Reading from the N-terminus, the 71-residue chain is LKHEDTNLSVSLTDSSVVSLYSGTVLFKSMHTLPTNARCPNLSVISATSGMSQCELSQSSMPWWCRSLVFS.

Belongs to the arrestin family. As to expression, adrenal, cerebral cortex, heart, liver, lung, pituitary and testis.

The chain is Arrestin-D (Dar) from Rattus norvegicus (Rat).